Here is a 385-residue protein sequence, read N- to C-terminus: Aldehyde dehydrogenase family 3 member B2 (385 aa).

G107–G112 contacts NAD(+). Residues E129 and C163 contribute to the active site. C382 bears the Cysteine methyl ester mark. A lipid anchor (S-geranylgeranyl cysteine) is attached at C382. A propeptide spans T383 to L385 (removed in mature form).

This sequence belongs to the aldehyde dehydrogenase family. In terms of processing, geranylgeranylation is important for localization to lipid droplets and enzyme activity. As to expression, salivary gland. Expressed at protein level in placenta.

The protein localises to the lipid droplet. The catalysed reaction is an aldehyde + NAD(+) + H2O = a carboxylate + NADH + 2 H(+). The enzyme catalyses a long-chain fatty aldehyde + NAD(+) + H2O = a long-chain fatty acid + NADH + 2 H(+). It catalyses the reaction a medium-chain fatty aldehyde + NAD(+) + H2O = a medium-chain fatty acid + NADH + 2 H(+). It carries out the reaction hexadecanoate + NADH + 2 H(+) = hexadecanal + NAD(+) + H2O. The catalysed reaction is octanal + NAD(+) + H2O = octanoate + NADH + 2 H(+). It participates in alcohol metabolism; ethanol degradation; acetate from ethanol: step 2/2. Its function is as follows. Oxidizes medium and long chain fatty aldehydes in lipid droplets into non-toxic fatty acids. This chain is Aldehyde dehydrogenase family 3 member B2 (ALDH3B2), found in Homo sapiens (Human).